The chain runs to 425 residues: UDP-N-acetylglucosamine 1-carboxyvinyltransferase (425 aa).

23–24 (KN) serves as a coordination point for phosphoenolpyruvate. Arginine 100 is a UDP-N-acetyl-alpha-D-glucosamine binding site. Residue cysteine 124 is the Proton donor of the active site. 2-(S-cysteinyl)pyruvic acid O-phosphothioketal is present on cysteine 124. Aspartate 313 and isoleucine 335 together coordinate UDP-N-acetyl-alpha-D-glucosamine.

This sequence belongs to the EPSP synthase family. MurA subfamily.

The protein resides in the cytoplasm. It catalyses the reaction phosphoenolpyruvate + UDP-N-acetyl-alpha-D-glucosamine = UDP-N-acetyl-3-O-(1-carboxyvinyl)-alpha-D-glucosamine + phosphate. Its pathway is cell wall biogenesis; peptidoglycan biosynthesis. Functionally, cell wall formation. Adds enolpyruvyl to UDP-N-acetylglucosamine. This Wolbachia pipientis wMel protein is UDP-N-acetylglucosamine 1-carboxyvinyltransferase.